The following is an 871-amino-acid chain: Translation initiation factor IF-2 (871 aa).

Disordered regions lie at residues 60–101 and 184–203; these read KKNI…QEVK and ESLK…KKES. A compositionally biased stretch (basic residues) spans 61–72; sequence KNIKTPTAKKPK. Over residues 73-101 the composition is skewed to basic and acidic residues; it reads KENIKEQEKLNESEKKEPKKEEKLKQEVK. The tr-type G domain occupies 370-537; that stretch reads TRAPVITIMG…IVLLQADILE (168 aa). The G1 stretch occupies residues 379–386; it reads GHVDHGKT. 379–386 is a GTP binding site; sequence GHVDHGKT. The G2 stretch occupies residues 404 to 408; sequence GITQH. Positions 425–428 are G3; it reads DTPG. Residues 425-429 and 479-482 contribute to the GTP site; these read DTPGH and NKMD. Positions 479 to 482 are G4; that stretch reads NKMD. Positions 515–517 are G5; the sequence is SAK.

It belongs to the TRAFAC class translation factor GTPase superfamily. Classic translation factor GTPase family. IF-2 subfamily.

The protein resides in the cytoplasm. Its function is as follows. One of the essential components for the initiation of protein synthesis. Protects formylmethionyl-tRNA from spontaneous hydrolysis and promotes its binding to the 30S ribosomal subunits. Also involved in the hydrolysis of GTP during the formation of the 70S ribosomal complex. This chain is Translation initiation factor IF-2, found in Campylobacter jejuni subsp. jejuni serotype O:6 (strain 81116 / NCTC 11828).